Consider the following 234-residue polypeptide: Orotidine 5'-phosphate decarboxylase (234 aa).

Residues aspartate 11, lysine 33, 60–69, threonine 120, arginine 181, glutamine 190, glycine 210, and arginine 211 each bind substrate; that span reads DLKFHDIPNT. Lysine 62 (proton donor) is an active-site residue.

Belongs to the OMP decarboxylase family. Type 1 subfamily. As to quaternary structure, homodimer.

It carries out the reaction orotidine 5'-phosphate + H(+) = UMP + CO2. It functions in the pathway pyrimidine metabolism; UMP biosynthesis via de novo pathway; UMP from orotate: step 2/2. Its function is as follows. Catalyzes the decarboxylation of orotidine 5'-monophosphate (OMP) to uridine 5'-monophosphate (UMP). This Aliivibrio salmonicida (strain LFI1238) (Vibrio salmonicida (strain LFI1238)) protein is Orotidine 5'-phosphate decarboxylase.